Reading from the N-terminus, the 745-residue chain is Copper-transporting ATPase (745 aa).

The 67-residue stretch at 1-67 (MKESFYIEGM…LIEKLGYSPK (67 aa)) folds into the HMA domain. The Cytoplasmic portion of the chain corresponds to 1–83 (MKESFYIEGM…KKEFFSPNVK (83 aa)). 2 residues coordinate Cu cation: Cys12 and Cys15. A helical transmembrane segment spans residues 84 to 104 (LALAVIFTLFVVYLSMGAMLS). Residues 105–124 (PSLLPESLLAINNHSNFLNA) lie on the Extracellular side of the membrane. A helical transmembrane segment spans residues 125-144 (CLQLIGALIVMHLGRDFYIQ). At 145 to 151 (GFKALWH) the chain is on the cytoplasmic side. The chain crosses the membrane as a helical span at residues 152–172 (RQPNMSSLIAIGTSAALISSL). Topologically, residues 173–194 (WQLYLVYTNHYTDQWSYGHYYF) are extracellular. The chain crosses the membrane as a helical span at residues 195 to 215 (ESVCVILMFVMVGKRIENVSK). Topologically, residues 216 to 343 (DKALDAMQAL…KAEISRLADK (128 aa)) are cytoplasmic. The chain crosses the membrane as a helical span at residues 344-366 (VSSVFVPSVIAIAILAFVVWLII). The Extracellular portion of the chain corresponds to 367–379 (APKPDFWWNFGIA). Residues 380–397 (LEVFVSVLVISCPCALGL) traverse the membrane as a helical segment. Over 398 to 685 (ATPMSILVAN…KLSQATIKNI (288 aa)) the chain is Cytoplasmic. The active-site 4-aspartylphosphate intermediate is the Asp435. Mg(2+)-binding residues include Asp631 and Asp635. A helical transmembrane segment spans residues 686–705 (KENLFWAFCYNSVFIPLACG). Residues 706–716 (VLYKANIMLSP) are Extracellular-facing. Residues 717 to 735 (AIAGLAMSLSSVSVVLNSQ) form a helical membrane-spanning segment. Over 736–745 (RLRNFKIKDH) the chain is Cytoplasmic.

This sequence belongs to the cation transport ATPase (P-type) (TC 3.A.3) family. Type IB subfamily.

The protein resides in the cell membrane. It catalyses the reaction Cu(2+)(in) + ATP + H2O = Cu(2+)(out) + ADP + phosphate + H(+). Probably involved in copper export. In Helicobacter pylori (Campylobacter pylori), this protein is Copper-transporting ATPase (copA).